The chain runs to 109 residues: MSAQPVDLQIFGRSLRVNCPPEQQDALNLAAEDLNQRLQDLKVRTRVTNTEQLVFIAALNICHELAQEKSKTRDYASNMEQRIRMLQQTIEQALLEQGRITERTGTNFE.

A coiled-coil region spans residues 22 to 99 (EQQDALNLAA…IEQALLEQGR (78 aa)).

This sequence belongs to the ZapA family. Type 1 subfamily. As to quaternary structure, homodimer. Interacts with FtsZ.

It is found in the cytoplasm. Its function is as follows. Activator of cell division through the inhibition of FtsZ GTPase activity, therefore promoting FtsZ assembly into bundles of protofilaments necessary for the formation of the division Z ring. It is recruited early at mid-cell but it is not essential for cell division. The chain is Cell division protein ZapA from Erwinia tasmaniensis (strain DSM 17950 / CFBP 7177 / CIP 109463 / NCPPB 4357 / Et1/99).